Reading from the N-terminus, the 372-residue chain is Ligninase B (372 aa).

A signal peptide spans 1–21; it reads MAFKQLFAAISLALSLSAANA. Positions 22–28 are excised as a propeptide; it reads AAVIEKR. 4 cysteine pairs are disulfide-bonded: C31–C43, C42–C313, C62–C148, and C277–C345. H75 (proton acceptor) is an active-site residue. The Ca(2+) site is built by D76, G94, D96, and S98. Residue H204 coordinates heme b. Residues S205, D222, T224, I227, and D229 each contribute to the Ca(2+) site. N285 carries N-linked (GlcNAc...) asparagine glycosylation. Residues 350-361 show a composition bias toward low complexity; it reads FPTLTTLPGPET. The segment at 350-372 is disordered; sequence FPTLTTLPGPETSVQRIPPPPGA.

This sequence belongs to the peroxidase family. Ligninase subfamily. Heme b serves as cofactor. It depends on Ca(2+) as a cofactor.

The catalysed reaction is 1-(3,4-dimethoxyphenyl)-2-(2-methoxyphenoxy)propane-1,3-diol + H2O2 = 3,4-dimethoxybenzaldehyde + guaiacol + glycolaldehyde + H2O. It carries out the reaction 2 (3,4-dimethoxyphenyl)methanol + H2O2 = 2 (3,4-dimethoxyphenyl)methanol radical + 2 H2O. Its pathway is secondary metabolite metabolism; lignin degradation. Functionally, depolymerization of lignin. Catalyzes the C(alpha)-C(beta) cleavage of the propyl side chains of lignin. The polypeptide is Ligninase B (LIPB) (Phanerodontia chrysosporium (White-rot fungus)).